The primary structure comprises 339 residues: Photosystem II assembly lipoprotein Ycf48 (339 aa).

An N-terminal signal peptide occupies residues 1 to 22 (MVIVKSWQKIFTLLVVLLLCIG). The N-palmitoyl cysteine moiety is linked to residue Cys-23. The S-diacylglycerol cysteine moiety is linked to residue Cys-23.

The protein belongs to the Ycf48 family. Part of early PSII assembly complexes which includes D1 (psbA) and PsbI; not found in mature PSII. Binds to the lumenal side of PSII complexes. Interacts with YidC.

It is found in the cellular thylakoid membrane. A factor required for optimal assembly of photosystem II (PSII), acting in the early stages of PSII assembly. Also plays a role in replacement of photodamaged D1 (psbA). Assists YidC in synthesis of chlorophyll-binding proteins. This chain is Photosystem II assembly lipoprotein Ycf48, found in Nostoc sp. (strain PCC 7120 / SAG 25.82 / UTEX 2576).